The sequence spans 160 residues: Cyanate hydratase (160 aa).

Active-site residues include arginine 100, glutamate 103, and serine 126.

This sequence belongs to the cyanase family.

It carries out the reaction cyanate + hydrogencarbonate + 3 H(+) = NH4(+) + 2 CO2. In terms of biological role, catalyzes the reaction of cyanate with bicarbonate to produce ammonia and carbon dioxide. The chain is Cyanate hydratase from Aspergillus oryzae (strain ATCC 42149 / RIB 40) (Yellow koji mold).